Here is a 442-residue protein sequence, read N- to C-terminus: Putative protein YjbI (442 aa).

The sequence is that of Putative protein YjbI (yjbI) from Escherichia coli (strain K12).